A 444-amino-acid chain; its full sequence is Bifunctional protein GlmU (444 aa).

The segment at 1–226 is pyrophosphorylase; the sequence is MTDSTHRTTA…EAELAGVNSR (226 aa). Residues 13 to 16, K27, Q75, and 80 to 81 each bind UDP-N-acetyl-alpha-D-glucosamine; these read LAAG and GT. D103 contacts Mg(2+). UDP-N-acetyl-alpha-D-glucosamine-binding residues include G139, E153, N168, and N224. Residue N224 participates in Mg(2+) binding. Residues 227–247 are linker; that stretch reads SELARAEATLQTRLRNAAMDA. An N-acetyltransferase region spans residues 248-444; the sequence is GVTLVAPETV…QSLKARKEQG (197 aa). UDP-N-acetyl-alpha-D-glucosamine-binding residues include R313 and K331. H343 acts as the Proton acceptor in catalysis. Y346 and N357 together coordinate UDP-N-acetyl-alpha-D-glucosamine. Residues A360, 366–367, S385, A403, and R420 contribute to the acetyl-CoA site; that span reads NY.

This sequence in the N-terminal section; belongs to the N-acetylglucosamine-1-phosphate uridyltransferase family. In the C-terminal section; belongs to the transferase hexapeptide repeat family. Homotrimer. Mg(2+) serves as cofactor.

Its subcellular location is the cytoplasm. The catalysed reaction is alpha-D-glucosamine 1-phosphate + acetyl-CoA = N-acetyl-alpha-D-glucosamine 1-phosphate + CoA + H(+). It carries out the reaction N-acetyl-alpha-D-glucosamine 1-phosphate + UTP + H(+) = UDP-N-acetyl-alpha-D-glucosamine + diphosphate. It participates in nucleotide-sugar biosynthesis; UDP-N-acetyl-alpha-D-glucosamine biosynthesis; N-acetyl-alpha-D-glucosamine 1-phosphate from alpha-D-glucosamine 6-phosphate (route II): step 2/2. Its pathway is nucleotide-sugar biosynthesis; UDP-N-acetyl-alpha-D-glucosamine biosynthesis; UDP-N-acetyl-alpha-D-glucosamine from N-acetyl-alpha-D-glucosamine 1-phosphate: step 1/1. It functions in the pathway bacterial outer membrane biogenesis; LPS lipid A biosynthesis. Functionally, catalyzes the last two sequential reactions in the de novo biosynthetic pathway for UDP-N-acetylglucosamine (UDP-GlcNAc). The C-terminal domain catalyzes the transfer of acetyl group from acetyl coenzyme A to glucosamine-1-phosphate (GlcN-1-P) to produce N-acetylglucosamine-1-phosphate (GlcNAc-1-P), which is converted into UDP-GlcNAc by the transfer of uridine 5-monophosphate (from uridine 5-triphosphate), a reaction catalyzed by the N-terminal domain. The polypeptide is Bifunctional protein GlmU (Gluconobacter oxydans (strain 621H) (Gluconobacter suboxydans)).